The primary structure comprises 315 residues: Aspartate carbamoyltransferase catalytic subunit (315 aa).

Residues Arg-64 and Thr-65 each coordinate carbamoyl phosphate. Residue Lys-92 coordinates L-aspartate. Carbamoyl phosphate contacts are provided by Arg-114, His-142, and Gln-145. Arg-175 and Arg-229 together coordinate L-aspartate. 2 residues coordinate carbamoyl phosphate: Gly-270 and Pro-271.

This sequence belongs to the aspartate/ornithine carbamoyltransferase superfamily. ATCase family. In terms of assembly, heterododecamer (2C3:3R2) of six catalytic PyrB chains organized as two trimers (C3), and six regulatory PyrI chains organized as three dimers (R2).

The enzyme catalyses carbamoyl phosphate + L-aspartate = N-carbamoyl-L-aspartate + phosphate + H(+). The protein operates within pyrimidine metabolism; UMP biosynthesis via de novo pathway; (S)-dihydroorotate from bicarbonate: step 2/3. In terms of biological role, catalyzes the condensation of carbamoyl phosphate and aspartate to form carbamoyl aspartate and inorganic phosphate, the committed step in the de novo pyrimidine nucleotide biosynthesis pathway. The sequence is that of Aspartate carbamoyltransferase catalytic subunit from Methylorubrum populi (strain ATCC BAA-705 / NCIMB 13946 / BJ001) (Methylobacterium populi).